Consider the following 513-residue polypeptide: Noroxomaritidine synthase 1 (513 aa).

The chain crosses the membrane as a helical span at residues 18–34 (ILIAIACLVVFSLLRSA). C458 is a heme binding site.

It belongs to the cytochrome P450 family. The cofactor is heme. As to expression, mostly expressed in stems, and, to a lower extent, in bulbs, roots, leaves and flowers.

It is found in the membrane. It catalyses the reaction 4'-O-methylnorbelladine + reduced [NADPH--hemoprotein reductase] + O2 = (10bR,4aS)-noroxomaritidine + oxidized [NADPH--hemoprotein reductase] + 2 H2O + H(+). It carries out the reaction 4'-O-methylnorbelladine + reduced [NADPH--hemoprotein reductase] + O2 = (10bS,4aR)-noroxomaritidine + oxidized [NADPH--hemoprotein reductase] + 2 H2O + H(+). Its pathway is alkaloid biosynthesis. Cytochrome P450 that catalyzes an intramolecular para-para' C-C phenol coupling of 4'-O-methylnorbelladine in alkaloids biosynthesis, including haemanthamine- and crinamine-type alkaloids, promising anticancer agents. Catalyzes the formation of (10bR,4aS)-noroxomaritidine and (10bS,4aR)-noroxomaritidine from 4'-O-methylnorbelladine. This Narcissus pseudonarcissus (Daffodil) protein is Noroxomaritidine synthase 1.